Consider the following 624-residue polypeptide: MLSRYNRVIEINGGNADISLPIVKFPPFKLRAQLIEKDPVVWLHLIETYVTYFEYLMQGANVELLDESTLDHLRLFLRTYLHEIADEEGKLLSLGINHDVSEQLYLLKGWIFSLIKKCGLLHLQIFGDSLWNLIKVYVRRNPDSIRGLIDGSLKPRINTQRVQLDKSYQVQQHLKQLIESGKFKRIDLRCVEDLLSAKSMQPNKFAENFFTANWIEILEALWAKGQGRGHKEARELIIISLFSVSADRLLKITKELGISNFETLALYPLLGTMLINEGVHKRLPDLKSKLLFLNLGGLSMDEGDHMSYPTSSGTEVNEEQLSALMELFPQFSKYQLSQTLLAYDNNIELVTNKIFEDPTIIEAFSREPAEEEVEPVSDGDNASFTEELSILDRGDSSKNKELDKKIISEGVPDELRNKTLTRALKLLYEADEDERDDTYDEADVNRSDPSKRIGLQEDEESYDTKDDSNEVRQDHNYHIVEAYLWNLLKEDPKLFERSKRGTKVRKTMKEMTSWSDEKIEGWCRMLERSPTRARLLEKKFMFKGNSKTGKTSYVHNRDSQNDGNVVKEQAKQKKSENIKKHEPQSTEQKKRQHAKNEKRKGARANHNRKKGHDKKLARAGNNAI.

The CUE domain occupies 316–359 (VNEEQLSALMELFPQFSKYQLSQTLLAYDNNIELVTNKIFEDPT). 3 disordered regions span residues 366-390 (REPAEEEVEPVSDGDNASFTEELSI), 435-469 (RDDTYDEADVNRSDPSKRIGLQEDEESYDTKDDSN), and 546-624 (SKTG…NNAI). Phosphoserine is present on Ser-377. 2 stretches are compositionally biased toward basic and acidic residues: residues 443–455 (DVNRSDPSKRIGL) and 568–589 (EQAKQKKSENIKKHEPQSTEQK). Positions 590–617 (KRQHAKNEKRKGARANHNRKKGHDKKLA) are enriched in basic residues.

As to quaternary structure, component of the RQT (ribosome quality control trigger) complex, composed of SLH1, CUE3, and RQT4. Interacts with ubiquitin; the interaction is direct. Interacts with SLH1. Interacts with RQT4. Interacts with HEL2. Associates with translating ribosomes.

The protein resides in the cytoplasm. In terms of biological role, involved in activation of the ribosome quality control (RQC) pathway, a pathway that degrades nascent peptide chains during problematic translation. Specifically recognizes and binds RPS20/uS10 ubiquitinated by HEL2, promoting recruitment of the RQT (ribosome quality control trigger) complex on stalled ribosomes, followed by disassembly of stalled ribosomes. The chain is RQC trigger complex subunit CUE3 (CUE3) from Saccharomyces cerevisiae (strain ATCC 204508 / S288c) (Baker's yeast).